The chain runs to 244 residues: Putative ribosomal recycling factor, mitochondrial (244 aa).

It belongs to the RRF family.

It localises to the mitochondrion. Its function is as follows. Necessary for protein synthesis in mitochondria. Functions as a ribosome recycling factor in mitochondria. This chain is Putative ribosomal recycling factor, mitochondrial (rrf1), found in Schizosaccharomyces pombe (strain 972 / ATCC 24843) (Fission yeast).